Reading from the N-terminus, the 88-residue chain is Gene 86 protein (88 aa).

Residues Trp64–Tyr88 are disordered. A compositionally biased stretch (acidic residues) spans Tyr71–Gly80.

The sequence is that of Gene 86 protein (86) from Mycobacterium (Mycobacteriophage L5).